The following is a 364-amino-acid chain: Protein-glutamate methylesterase/protein-glutamine glutaminase 3 (364 aa).

The 118-residue stretch at R7–R124 folds into the Response regulatory domain. D58 carries the 4-aspartylphosphate modification. Residues P167–K358 form the CheB-type methylesterase domain. Catalysis depends on residues S178, H204, and D300.

Belongs to the CheB family. In terms of processing, phosphorylated by CheA. Phosphorylation of the N-terminal regulatory domain activates the methylesterase activity.

It is found in the cytoplasm. It carries out the reaction [protein]-L-glutamate 5-O-methyl ester + H2O = L-glutamyl-[protein] + methanol + H(+). The catalysed reaction is L-glutaminyl-[protein] + H2O = L-glutamyl-[protein] + NH4(+). Its function is as follows. Involved in chemotaxis. Part of a chemotaxis signal transduction system that modulates chemotaxis in response to various stimuli. Catalyzes the demethylation of specific methylglutamate residues introduced into the chemoreceptors (methyl-accepting chemotaxis proteins or MCP) by CheR. Also mediates the irreversible deamidation of specific glutamine residues to glutamic acid. This is Protein-glutamate methylesterase/protein-glutamine glutaminase 3 from Rhodopseudomonas palustris (strain BisB18).